Consider the following 402-residue polypeptide: Advanced glycosylation end product-specific receptor (402 aa).

The signal sequence occupies residues 1 to 22 (MPTGTVARAWVLVLALWGAVAG). The region spanning 23–109 (GQNITARIGE…ATNRLGKEVK (87 aa)) is the Ig-like V-type domain. Topologically, residues 23–341 (GQNITARIGE…DGSGLGTLAL (319 aa)) are extracellular. 2 N-linked (GlcNAc...) asparagine glycosylation sites follow: asparagine 25 and asparagine 80. 2 disulfide bridges follow: cysteine 38–cysteine 98 and cysteine 143–cysteine 206. 2 consecutive Ig-like C2-type domains span residues 123 to 219 (PEIV…RPLN) and 233 to 315 (PEGI…PPVN). The helical transmembrane segment at 342–362 (ALGILGGLGIAALLIGAILWR) threads the bilayer. At 363 to 402 (KRQPRLEERKAPESQEDEEERAELNQSEEAEMPENGAGGP) the chain is on the cytoplasmic side. Residues 368–402 (LEERKAPESQEDEEERAELNQSEEAEMPENGAGGP) are disordered. A phosphoserine mark is found at serine 376 and serine 389. Residues 376–394 (SQEDEEERAELNQSEEAEM) show a composition bias toward acidic residues.

In terms of assembly, constitutive homodimer; disulfide-linked. Forms homooligomers. Interacts with S100A1 and APP. Interacts with S100B, S100A12 and S100A14. Interacts with TIRAP. Interacts with HMGB1. Interacts with LGP2; this interaction plays an important role in AGER-mediated pro-inflammatory responses and cytokine release. Interacts with double-strand break repair protein MRE11 which is a core component of the MRN complex; the interaction enhances MRE11 endonuclease activity and promotes DNA repair. Interacts with the MCM2-7 complex via interaction with complex member MCM2; the interaction is increased following DNA replication stress and stabilizes the MCM2-7 complex at replication forks. Phosphorylated on its cytoplasmic domain by PKCzeta/PRKCZ upon ligand binding. Phosphorylated by ATM following DNA damage. Post-translationally, targeted by the ubiquitin E3 ligase subunit FBXO10 to mediate its ubiquitination and degradation. As to expression, endothelial cells and cardiomyocytes. Expressed in brain.

The protein localises to the cell membrane. The protein resides in the cell projection. It is found in the phagocytic cup. Its subcellular location is the early endosome. It localises to the nucleus. Its function is as follows. Cell surface pattern recognition receptor that senses endogenous stress signals with a broad ligand repertoire including advanced glycation end products, S100 proteins, high-mobility group box 1 protein/HMGB1, amyloid beta/APP oligomers, nucleic acids, histones, phospholipids and glycosaminoglycans. Advanced glycosylation end products are nonenzymatically glycosylated proteins which accumulate in vascular tissue in aging and at an accelerated rate in diabetes. These ligands accumulate at inflammatory sites during the pathogenesis of various diseases including diabetes, vascular complications, neurodegenerative disorders and cancers, and RAGE transduces their binding into pro-inflammatory responses. Upon ligand binding, uses TIRAP and MYD88 as adapters to transduce the signal ultimately leading to the induction of inflammatory cytokines IL6, IL8 and TNFalpha through activation of NF-kappa-B. Interaction with S100A12 on endothelium, mononuclear phagocytes, and lymphocytes triggers cellular activation, with generation of key pro-inflammatory mediators. Interaction with S100B after myocardial infarction may play a role in myocyte apoptosis by activating ERK1/2 and p53/TP53 signaling. Contributes to the translocation of amyloid-beta peptide (ABPP) across the cell membrane from the extracellular to the intracellular space in cortical neurons. ABPP-initiated RAGE signaling, especially stimulation of p38 mitogen-activated protein kinase (MAPK), has the capacity to drive a transport system delivering ABPP as a complex with RAGE to the intraneuronal space. Participates in endothelial albumin transcytosis together with HMGB1 through the RAGE/SRC/Caveolin-1 pathway, leading to endothelial hyperpermeability. Mediates the loading of HMGB1 in extracellular vesicles (EVs) that shuttle HMGB1 to hepatocytes by transferrin-mediated endocytosis and subsequently promote hepatocyte pyroptosis by activating the NLRP3 inflammasome. Binds to DNA and promotes extracellular hypomethylated DNA (CpG DNA) uptake by cells via the endosomal route to activate inflammatory responses. Mediates phagocytosis by non-professional phagocytes (NPP) and this is enhanced by binding to ligands including RNA, DNA, HMGB1 and histones. Promotes NPP-mediated phagocytosis of Saccharomyces cerevisiae spores by binding to RNA attached to the spore wall. Also promotes NPP-mediated phagocytosis of apoptotic cells. Following DNA damage, recruited to DNA double-strand break sites where it colocalizes with the MRN repair complex via interaction with double-strand break repair protein MRE11. Enhances the endonuclease activity of MRE11, promoting the end resection of damaged DNA. Promotes DNA damage repair in trophoblasts which enhances trophoblast invasion and contributes to placental development and maintenance. Protects cells from DNA replication stress by localizing to damaged replication forks where it stabilizes the MCM2-7 complex and promotes faithful progression of the replication fork. The sequence is that of Advanced glycosylation end product-specific receptor (Ager) from Rattus norvegicus (Rat).